A 149-amino-acid polypeptide reads, in one-letter code: 3-dehydroquinate dehydratase (149 aa).

Tyr-26 functions as the Proton acceptor in the catalytic mechanism. Positions 77, 83, and 90 each coordinate substrate. His-103 acts as the Proton donor in catalysis. Substrate-binding positions include 104–105 (LS) and Arg-114.

This sequence belongs to the type-II 3-dehydroquinase family. In terms of assembly, homododecamer.

The enzyme catalyses 3-dehydroquinate = 3-dehydroshikimate + H2O. The protein operates within metabolic intermediate biosynthesis; chorismate biosynthesis; chorismate from D-erythrose 4-phosphate and phosphoenolpyruvate: step 3/7. In terms of biological role, catalyzes a trans-dehydration via an enolate intermediate. This Aeromonas salmonicida (strain A449) protein is 3-dehydroquinate dehydratase.